The chain runs to 122 residues: Large ribosomal subunit protein uL14 (122 aa).

It belongs to the universal ribosomal protein uL14 family. As to quaternary structure, part of the 50S ribosomal subunit. Forms a cluster with proteins L3 and L19. In the 70S ribosome, L14 and L19 interact and together make contacts with the 16S rRNA in bridges B5 and B8.

Its function is as follows. Binds to 23S rRNA. Forms part of two intersubunit bridges in the 70S ribosome. The chain is Large ribosomal subunit protein uL14 from Listeria monocytogenes serotype 4b (strain CLIP80459).